Reading from the N-terminus, the 171-residue chain is Alpha-amylase/trypsin inhibitor CMd (171 aa).

Residues 1 to 24 (MACKSSRSLLLLATVMVSVFAAAA) form the signal peptide.

It belongs to the protease inhibitor I6 (cereal trypsin/alpha-amylase inhibitor) family. Heterotetramer of one CMa, one CMb and two CMd chains. In terms of processing, five disulfide bonds, which are essential for the inhibitor activity, are probably present. As to expression, endosperm.

The protein resides in the secreted. Part of a complex with inhibitory activity, but CMd is inactive as a separate subunit. This is Alpha-amylase/trypsin inhibitor CMd (IAT3) from Hordeum vulgare (Barley).